We begin with the raw amino-acid sequence, 429 residues long: MQESLTLHPIKLINGTLNLPGSKSVSNRALLLAALSEGKTRLTNLLDSDDVRHMLTALTALGVEYHLSSDRTVCEIIGLGGAFAASQPLELFLGNAGTAMRPLAAALCLTDGDIVLTGEPRMKERPIGHLVDALRQGGAKIDYLEQENYPPLRLHGGFQGGEISVDGSVSSQFLTALLMTAPLAAQDTQISIQGDLVSKPYIDITLHMMKAFGIDVRHENYQRFFVAGRQQYRSPGDYLVEGDASSASYFLAAAAIKGGVVRVTGVGRNSVQGDIRFADVLEKMGAIVRWGEDYIECERGELHAIDMDMNHIPDAAMTIATAALFAQGGTTTLRNIYNWRVKETDRLAAMAIELRKVGAEVEEGNDYIRITPPAKLKAAEIGTYNDHRMAMCFSLVALSDTPVTILDPKCTAKTFPDYFEQLARLSELA.

Residues Lys23, Ser24, and Arg28 each contribute to the 3-phosphoshikimate site. Position 23 (Lys23) interacts with phosphoenolpyruvate. Residues Gly97 and Arg125 each coordinate phosphoenolpyruvate. 3-phosphoshikimate-binding residues include Ser170, Ser171, Gln172, Ser198, Asp314, Asn338, and Lys342. Position 172 (Gln172) interacts with phosphoenolpyruvate. Catalysis depends on Asp314, which acts as the Proton acceptor. Residues Arg346, Arg388, and Lys413 each contribute to the phosphoenolpyruvate site.

Belongs to the EPSP synthase family. As to quaternary structure, monomer.

Its subcellular location is the cytoplasm. It catalyses the reaction 3-phosphoshikimate + phosphoenolpyruvate = 5-O-(1-carboxyvinyl)-3-phosphoshikimate + phosphate. Its pathway is metabolic intermediate biosynthesis; chorismate biosynthesis; chorismate from D-erythrose 4-phosphate and phosphoenolpyruvate: step 6/7. Its function is as follows. Catalyzes the transfer of the enolpyruvyl moiety of phosphoenolpyruvate (PEP) to the 5-hydroxyl of shikimate-3-phosphate (S3P) to produce enolpyruvyl shikimate-3-phosphate and inorganic phosphate. In Pectobacterium atrosepticum (strain SCRI 1043 / ATCC BAA-672) (Erwinia carotovora subsp. atroseptica), this protein is 3-phosphoshikimate 1-carboxyvinyltransferase.